A 231-amino-acid chain; its full sequence is Cuticlin 2 (231 aa).

An N-terminal signal peptide occupies residues 1–16; that stretch reads MQKLIVFFTTIAAAQA. 12 tandem repeats follow at residues 75–78, 79–82, 90–93, 105–108, 114–117, 121–124, 137–140, 153–156, 169–172, 192–195, 208–211, and 218–221. The 12 X 4 AA repeats of A-A-P-[AVI] stretch occupies residues 75–221; the sequence is AAPIAAPAGG…AGGYQAAAPA (147 aa).

Post-translationally, tyrosine residues can be cross-linked in vitro, leading to the formation of insoluble high molecular-weight complexes.

The protein localises to the secreted. In terms of biological role, component of the insoluble part of the cuticles. The polypeptide is Cuticlin 2 (Caenorhabditis elegans).